We begin with the raw amino-acid sequence, 224 residues long: MGILGWVGLIAVGVLCVRGGLPSTEYVIRSRVAREVGDILKVPCVPLPSDDLDWRYETPSAINYALIDGIFLRYHCPGLDTVLWDRHAQKAYWVNPFLFVAGFLEDLSYPAFPANTQETETRLALYKEIRQALDSRKQAASHTPVKAGCVNFDYSRTRRCVGRQDLGPTNGTSGRTPVLPPDDEAGLQPKPLTTPPPIIATSDPTPRRDAATKSRRRRPHSRRL.

Positions 1 to 19 (MGILGWVGLIAVGVLCVRG) are cleaved as a signal peptide. An interaction with gH region spans residues 20 to 161 (GLPSTEYVIR…FDYSRTRRCV (142 aa)). The region spanning 23-201 (STEYVIRSRV…LTTPPPIIAT (179 aa)) is the gL alphaherpesvirus-type domain. Intrachain disulfides connect C44-C76 and C149-C160. The segment at 161–224 (VGRQDLGPTN…RRRRPHSRRL (64 aa)) is disordered. The span at 213–224 (KSRRRRPHSRRL) shows a compositional bias: basic residues.

It belongs to the herpesviridae glycoprotein L (gL) family. Alphaherpesvirinae gL subfamily. As to quaternary structure, interacts with glycoprotein H (gH); this interaction is necessary for the correct processing and cell surface expression of gH. The heterodimer gH/gL seems to interact with gB trimers during fusion.

The protein resides in the virion membrane. Its subcellular location is the host cell membrane. It localises to the host Golgi apparatus. The protein localises to the host trans-Golgi network. In terms of biological role, the heterodimer glycoprotein H-glycoprotein L is required for the fusion of viral and plasma membranes leading to virus entry into the host cell. Acts as a functional inhibitor of gH and maintains gH in an inhibited form. Upon binding to host integrins, gL dissociates from gH leading to activation of the viral fusion glycoproteins gB and gH. This is Envelope glycoprotein L from Human herpesvirus 1 (strain 17) (HHV-1).